The primary structure comprises 162 residues: Caveolin-2 (162 aa).

Over 1–86 (MGLETEKADV…FEMSKYVIYK (86 aa)) the chain is Cytoplasmic. Y19 carries the phosphotyrosine; by SRC modification. Residues S20 and S23 each carry the phosphoserine modification. A Phosphotyrosine; by SRC modification is found at Y27. Residues 87–107 (FLTVFLAIPLAFAAGILFATL) constitute an intramembrane region (helical). Residues 108-162 (SCLHIWIIMPFVKTCLMVLPSVQTIWKSVTDVVIAPLCTSVGRSFSSVSLQLSHD) are Cytoplasmic-facing.

Belongs to the caveolin family. As to quaternary structure, monomer or homodimer. Interacts with CAV1; the interaction forms a stable heterooligomeric complex that is required for targeting to lipid rafts and for caveolae formation. Tyrosine phosphorylated forms do not form heterooligomers with the Tyr-19-phosphorylated form existing as a monomer or dimer, and the Tyr-27-form as a monomer only. Interacts (tyrosine phosphorylated form) with the SH2 domain-containing proteins, RASA1, NCK1 and SRC. Interacts (tyrosine phosphorylated form) with INSR, the interaction (Tyr-27-phosphorylated form) is increased on insulin stimulation. Interacts (Tyr-19 phosphorylated form) with MAPK1 (phosphorylated form); the interaction, promoted by insulin, leads to nuclear location and MAPK1 activation. Interacts with STAT3; the interaction is increased on insulin-induced tyrosine phosphorylation leading to STAT activation. Post-translationally, phosphorylated on serine and tyrosine residues. CAV1 promotes phosphorylation on Ser-23 which then targets the complex to the plasma membrane, lipid rafts and caveolae. Phosphorylation on both Tyr-19 and Tyr-27 is required for insulin-induced 'Ser-727' phosphorylation of STAT3 and its activation. Phosphorylation on Tyr-19 is required for insulin-induced phosphorylation of MAPK1 and DNA binding of STAT3. Tyrosine phosphorylation is induced by both EGF and insulin.

It localises to the nucleus. The protein localises to the cytoplasm. The protein resides in the golgi apparatus membrane. Its subcellular location is the cell membrane. It is found in the membrane. It localises to the caveola. In terms of biological role, may act as a scaffolding protein within caveolar membranes. Interacts directly with G-protein alpha subunits and can functionally regulate their activity. Acts as an accessory protein in conjunction with CAV1 in targeting to lipid rafts and driving caveolae formation. Positive regulator of cellular mitogenesis of the MAPK signaling pathway. Required for the insulin-stimulated nuclear translocation and activation of MAPK1 and STAT3, and the subsequent regulation of cell cycle progression. The polypeptide is Caveolin-2 (CAV2) (Muntiacus muntjak (Barking deer)).